The chain runs to 514 residues: Membrane-bound lytic murein transglycosylase F (514 aa).

Residues 1–30 (MKKLKINYLFIGILTLLLAAALWPSIPWFG) form the signal peptide. Residues 31 to 269 (KTENHIAAIQ…RIEEKYLGHG (239 aa)) form a non-LT domain region. The interval 270-514 (DDFDYVDTRS…LFTPQKKEEK (245 aa)) is LT domain. E314 is an active-site residue.

It in the N-terminal section; belongs to the bacterial solute-binding protein 3 family. The protein in the C-terminal section; belongs to the transglycosylase Slt family.

It is found in the cell outer membrane. It carries out the reaction Exolytic cleavage of the (1-&gt;4)-beta-glycosidic linkage between N-acetylmuramic acid (MurNAc) and N-acetylglucosamine (GlcNAc) residues in peptidoglycan, from either the reducing or the non-reducing ends of the peptidoglycan chains, with concomitant formation of a 1,6-anhydrobond in the MurNAc residue.. Murein-degrading enzyme that degrades murein glycan strands and insoluble, high-molecular weight murein sacculi, with the concomitant formation of a 1,6-anhydromuramoyl product. Lytic transglycosylases (LTs) play an integral role in the metabolism of the peptidoglycan (PG) sacculus. Their lytic action creates space within the PG sacculus to allow for its expansion as well as for the insertion of various structures such as secretion systems and flagella. This chain is Membrane-bound lytic murein transglycosylase F, found in Salmonella choleraesuis (strain SC-B67).